Consider the following 396-residue polypeptide: Putative 2-hydroxyacid dehydrogenase YPL113C (396 aa).

Residues 227-228 (SI), 311-313 (VGR), and aspartate 337 each bind NAD(+). The active site involves arginine 313. The active site involves glutamate 342. The Proton donor role is filled by histidine 361. 361–364 (HIGS) lines the NAD(+) pocket.

The protein belongs to the D-isomer specific 2-hydroxyacid dehydrogenase family.

Functionally, putative 2-hydroxyacid dehydrogenase. This Saccharomyces cerevisiae (strain ATCC 204508 / S288c) (Baker's yeast) protein is Putative 2-hydroxyacid dehydrogenase YPL113C.